The following is a 247-amino-acid chain: STING ER exit protein (247 aa).

Serine 127 is subject to Phosphoserine. A coiled-coil region spans residues 195–216 (EAREIADSYANNARIIEKQLQR). The tract at residues 215-247 (QRKGGKLSDVGIKTKTEDAPPPQKKQRGTLLER) is disordered.

Belongs to the STEEP1 family.

Molecular adapter that stimulates membrane curvature formation and subsequent endoplasmic reticulum exit site (ERES) establishment by recruiting PI3K complex I, leading to COPII vesicle-mediated transport. The chain is STING ER exit protein from Drosophila melanogaster (Fruit fly).